Reading from the N-terminus, the 431-residue chain is 3-phosphoshikimate 1-carboxyvinyltransferase (431 aa).

3-phosphoshikimate is bound by residues Lys-21, Ser-22, and Arg-26. Lys-21 provides a ligand contact to phosphoenolpyruvate. Residues Gly-93 and Arg-122 each coordinate phosphoenolpyruvate. Residues Ser-167, Gln-169, Asp-318, and Lys-345 each contribute to the 3-phosphoshikimate site. A phosphoenolpyruvate-binding site is contributed by Gln-169. Residue Asp-318 is the Proton acceptor of the active site. Positions 349 and 391 each coordinate phosphoenolpyruvate.

This sequence belongs to the EPSP synthase family. As to quaternary structure, monomer.

The protein localises to the cytoplasm. It carries out the reaction 3-phosphoshikimate + phosphoenolpyruvate = 5-O-(1-carboxyvinyl)-3-phosphoshikimate + phosphate. It functions in the pathway metabolic intermediate biosynthesis; chorismate biosynthesis; chorismate from D-erythrose 4-phosphate and phosphoenolpyruvate: step 6/7. Catalyzes the transfer of the enolpyruvyl moiety of phosphoenolpyruvate (PEP) to the 5-hydroxyl of shikimate-3-phosphate (S3P) to produce enolpyruvyl shikimate-3-phosphate and inorganic phosphate. The protein is 3-phosphoshikimate 1-carboxyvinyltransferase of Roseiflexus castenholzii (strain DSM 13941 / HLO8).